Here is a 205-residue protein sequence, read N- to C-terminus: Small ribosomal subunit protein uS4 (205 aa).

The S4 RNA-binding domain maps to 94-154 (SRLDNSVYRA…TRKDGKIRKN (61 aa)).

Belongs to the universal ribosomal protein uS4 family. In terms of assembly, part of the 30S ribosomal subunit. Contacts protein S5. The interaction surface between S4 and S5 is involved in control of translational fidelity.

Its function is as follows. One of the primary rRNA binding proteins, it binds directly to 16S rRNA where it nucleates assembly of the body of the 30S subunit. With S5 and S12 plays an important role in translational accuracy. The sequence is that of Small ribosomal subunit protein uS4 from Mesomycoplasma hyopneumoniae (strain 232) (Mycoplasma hyopneumoniae).